The following is a 617-amino-acid chain: 1-deoxy-D-xylulose-5-phosphate synthase (617 aa).

Thiamine diphosphate contacts are provided by residues His77 and 118–120 (GHS). Asp149 is a Mg(2+) binding site. Thiamine diphosphate is bound by residues 150 to 151 (GA), Asn178, Tyr286, and Glu367. Asn178 contributes to the Mg(2+) binding site.

This sequence belongs to the transketolase family. DXPS subfamily. Homodimer. Mg(2+) serves as cofactor. Thiamine diphosphate is required as a cofactor.

It catalyses the reaction D-glyceraldehyde 3-phosphate + pyruvate + H(+) = 1-deoxy-D-xylulose 5-phosphate + CO2. It participates in metabolic intermediate biosynthesis; 1-deoxy-D-xylulose 5-phosphate biosynthesis; 1-deoxy-D-xylulose 5-phosphate from D-glyceraldehyde 3-phosphate and pyruvate: step 1/1. Catalyzes the acyloin condensation reaction between C atoms 2 and 3 of pyruvate and glyceraldehyde 3-phosphate to yield 1-deoxy-D-xylulose-5-phosphate (DXP). This Actinobacillus pleuropneumoniae serotype 5b (strain L20) protein is 1-deoxy-D-xylulose-5-phosphate synthase.